A 236-amino-acid chain; its full sequence is UPF0502 protein Bcenmc03_4618 (236 aa).

Belongs to the UPF0502 family.

This is UPF0502 protein Bcenmc03_4618 from Burkholderia orbicola (strain MC0-3).